The following is a 118-amino-acid chain: Large ribosomal subunit protein bL19 (118 aa).

The protein belongs to the bacterial ribosomal protein bL19 family.

This protein is located at the 30S-50S ribosomal subunit interface and may play a role in the structure and function of the aminoacyl-tRNA binding site. The protein is Large ribosomal subunit protein bL19 of Helicobacter acinonychis (strain Sheeba).